The primary structure comprises 481 residues: UDP-glycosyltransferase 72E3 (481 aa).

The active-site Proton acceptor is histidine 18. Histidine 18 lines the an anthocyanidin pocket. Aspartate 111 functions as the Charge relay in the catalytic mechanism. Residues alanine 346, glutamine 348, histidine 363, tryptophan 366, serine 368, and glutamate 371 each contribute to the UDP-alpha-D-glucose site. Alanine 386 serves as a coordination point for an anthocyanidin. Glutamate 387 and glutamine 388 together coordinate UDP-alpha-D-glucose.

The protein belongs to the UDP-glycosyltransferase family. As to expression, expressed in seedlings and roots, and at lower levels in flowers and siliques.

The catalysed reaction is (E)-4-coumarate + UDP-alpha-D-glucose = 4-O-(beta-D-glucosyl)-trans-4-coumarate + UDP + H(+). The enzyme catalyses (E)-sinapyl alcohol + UDP-alpha-D-glucose = 4-O-(beta-D-glucosyl)-trans-4-sinapoyl alcohol + UDP + H(+). It catalyses the reaction (E)-coniferol + UDP-alpha-D-glucose = 4-O-(beta-D-glucosyl)-(E)-coniferol + UDP + H(+). It carries out the reaction (E)-sinapate + UDP-alpha-D-glucose = 4-O-(beta-D-glucosyl)-trans-sinapate + UDP + H(+). The catalysed reaction is (E)-coniferaldehyde + UDP-alpha-D-glucose = 4-O-(beta-D-glucosyl)-4-(E)-coniferyl aldehyde + UDP + H(+). The enzyme catalyses (E)-sinapaldehyde + UDP-alpha-D-glucose = 4-O-(beta-D-glucosyl)-4-trans-sinapoyl aldehyde + UDP + H(+). Involved in the O-glucosylation of monolignols (alcohol monomers of lignin). Glucosylates coniferyl alcohol to form coniferyl alcohol 4-O-glucoside. Glucosylates sinapyl alcohol to form sinapyl alcohol 4-O-glucoside. Possesses low activity with sinapate as substrate. This Arabidopsis thaliana (Mouse-ear cress) protein is UDP-glycosyltransferase 72E3.